The chain runs to 56 residues: HVRNHFGSKPHKCGKCNYSCVNKSMLNSHMKSHTNVYQYRCADCTYATKYCHSLKL.

C2H2-type zinc fingers lie at residues 1-5 (HVRNH), 11-33 (HKCG…MKSH), and 39-56 (YRCA…SLKL).

It belongs to the hunchback C2H2-type zinc-finger protein family.

It is found in the nucleus. In terms of biological role, gap class segmentation protein that controls development of head structures. This Bithynia tentaculata (Spire snail) protein is Protein hunchback (hb).